The primary structure comprises 740 residues: Catalase-peroxidase (740 aa).

The segment covering 1–16 (MSENHDAIVTDAKTEE) has biased composition (basic and acidic residues). Positions 1-38 (MSENHDAIVTDAKTEETDGCPVAHGRAPHPTQGGGNRQ) are disordered. The segment at residues 108–231 (WHSAGTYRIS…LGAVQMGLIY (124 aa)) is a cross-link (tryptophyl-tyrosyl-methioninium (Trp-Tyr) (with M-257)). Histidine 109 serves as the catalytic Proton acceptor. The segment at residues 231-257 (YVNPEGPNGNPDPIAAARDIRETFRRM) is a cross-link (tryptophyl-tyrosyl-methioninium (Tyr-Met) (with W-108)). Histidine 272 serves as a coordination point for heme b.

Belongs to the peroxidase family. Peroxidase/catalase subfamily. In terms of assembly, homodimer. Heme b serves as cofactor. In terms of processing, formation of the three residue Trp-Tyr-Met cross-link is important for the catalase, but not the peroxidase activity of the enzyme.

The enzyme catalyses H2O2 + AH2 = A + 2 H2O. The catalysed reaction is 2 H2O2 = O2 + 2 H2O. Its function is as follows. Bifunctional enzyme with both catalase and broad-spectrum peroxidase activity. The polypeptide is Catalase-peroxidase (Streptomyces coelicolor (strain ATCC BAA-471 / A3(2) / M145)).